A 157-amino-acid polypeptide reads, in one-letter code: Parasitophorous vacuole membrane protein S16 (157 aa).

The signal sequence occupies residues 1 to 25 (MNIRKFIPSLALMLIFFAFANLVLS). Over 26-105 (DANDKAKKPA…DKKTTVNRNL (80 aa)) the chain is Extracellular. Positions 30 to 74 (KAKKPAGKGSPSTLQTPGSSSGASLHAVGPNQGGLSQGLSGKDSA) are disordered. Over residues 39–52 (SPSTLQTPGSSSGA) the composition is skewed to polar residues. A helical transmembrane segment spans residues 106 to 126 (IISTAVTNMIMLIILSGIVGF). The Cytoplasmic portion of the chain corresponds to 127-157 (KVKKTKNADDDKGDKDKDKDNTDEGDEGDDS). The interval 130 to 157 (KTKNADDDKGDKDKDKDNTDEGDEGDDS) is disordered. Over residues 132 to 148 (KNADDDKGDKDKDKDNT) the composition is skewed to basic and acidic residues.

Its subcellular location is the parasitophorous vacuole membrane. The protein localises to the vacuole. Functionally, involved in male gametogenesis. Required for exflagellation of male gametocytes. May play a role in parasite transmission in the mosquito. Binds to the mosquito vector midgut. In Plasmodium falciparum (isolate 3D7), this protein is Parasitophorous vacuole membrane protein S16.